The chain runs to 312 residues: Ribosomal RNA small subunit methyltransferase H (312 aa).

S-adenosyl-L-methionine contacts are provided by residues 34 to 36 (GGH), Asp54, Phe81, Asp102, and Gln109.

This sequence belongs to the methyltransferase superfamily. RsmH family.

The protein localises to the cytoplasm. The catalysed reaction is cytidine(1402) in 16S rRNA + S-adenosyl-L-methionine = N(4)-methylcytidine(1402) in 16S rRNA + S-adenosyl-L-homocysteine + H(+). In terms of biological role, specifically methylates the N4 position of cytidine in position 1402 (C1402) of 16S rRNA. The sequence is that of Ribosomal RNA small subunit methyltransferase H from Geotalea uraniireducens (strain Rf4) (Geobacter uraniireducens).